A 149-amino-acid chain; its full sequence is Protein GR6 (149 aa).

As to expression, expressed in fetus (aged from 7 to 8 weeks). Weakly expressed in lymphocytes.

This is Protein GR6 from Homo sapiens (Human).